A 150-amino-acid chain; its full sequence is Probable antibacterial peptide (150 aa).

The N-terminal stretch at 1–19 (MHIARFCLLSSMAVLALSA) is a signal peptide.

The protein localises to the secreted. Functionally, has antibacterial activity in vitro. This chain is Probable antibacterial peptide, found in Riptortus clavatus (Bean bug).